The chain runs to 165 residues: Large ribosomal subunit protein uL10 (165 aa).

This sequence belongs to the universal ribosomal protein uL10 family. In terms of assembly, part of the ribosomal stalk of the 50S ribosomal subunit. The N-terminus interacts with L11 and the large rRNA to form the base of the stalk. The C-terminus forms an elongated spine to which L12 dimers bind in a sequential fashion forming a multimeric L10(L12)X complex.

Functionally, forms part of the ribosomal stalk, playing a central role in the interaction of the ribosome with GTP-bound translation factors. In Dechloromonas aromatica (strain RCB), this protein is Large ribosomal subunit protein uL10.